We begin with the raw amino-acid sequence, 623 residues long: 1-deoxy-D-xylulose-5-phosphate synthase (623 aa).

Thiamine diphosphate is bound by residues H80 and G121 to S123. Mg(2+) is bound at residue D152. Thiamine diphosphate contacts are provided by residues G153–A154, N181, Y289, and E372. N181 is a binding site for Mg(2+).

This sequence belongs to the transketolase family. DXPS subfamily. In terms of assembly, homodimer. Mg(2+) serves as cofactor. Requires thiamine diphosphate as cofactor.

The catalysed reaction is D-glyceraldehyde 3-phosphate + pyruvate + H(+) = 1-deoxy-D-xylulose 5-phosphate + CO2. The protein operates within metabolic intermediate biosynthesis; 1-deoxy-D-xylulose 5-phosphate biosynthesis; 1-deoxy-D-xylulose 5-phosphate from D-glyceraldehyde 3-phosphate and pyruvate: step 1/1. Its function is as follows. Catalyzes the acyloin condensation reaction between C atoms 2 and 3 of pyruvate and glyceraldehyde 3-phosphate to yield 1-deoxy-D-xylulose-5-phosphate (DXP). The chain is 1-deoxy-D-xylulose-5-phosphate synthase from Baumannia cicadellinicola subsp. Homalodisca coagulata.